Consider the following 540-residue polypeptide: T-complex protein 1 subunit theta (540 aa).

Belongs to the TCP-1 chaperonin family. Heterooligomeric complex of about 850 to 900 kDa that forms two stacked rings, 12 to 16 nm in diameter.

The protein resides in the cytoplasm. In terms of biological role, molecular chaperone; assists the folding of proteins upon ATP hydrolysis. Known to play a role, in vitro, in the folding of actin and tubulin. In yeast may play a role in mitotic spindle formation. The polypeptide is T-complex protein 1 subunit theta (CCT8) (Candida albicans (Yeast)).